The sequence spans 598 residues: Phospholipase B-like protein G (598 aa).

Positions 1–24 (MIKSYYLFFIILIFLIFINNFILC) are cleaved as a signal peptide. 9 N-linked (GlcNAc...) asparagine glycosylation sites follow: Asn-50, Asn-98, Asn-173, Asn-341, Asn-368, Asn-450, Asn-480, Asn-526, and Asn-576.

Belongs to the phospholipase B-like family.

It localises to the secreted. Probable phospholipase. This Dictyostelium discoideum (Social amoeba) protein is Phospholipase B-like protein G (plbG).